A 579-amino-acid polypeptide reads, in one-letter code: Leucine-rich repeat-containing protein 15 (579 aa).

The first 21 residues, 1-21, serve as a signal peptide directing secretion; sequence MPLKHYLLLLVSCQAWAAGLA. One can recognise an LRRNT domain in the interval 22-53; that stretch reads YYGCPSECTCSRASQVECTGAQIVAMPSPLPW. The Extracellular segment spans residues 22–536; that stretch reads YYGCPSECTC…TWGMTDAQSG (515 aa). LRR repeat units follow at residues 54–75, 78–99, 102–123, 126–147, 150–171, 174–195, 198–219, 222–243, 246–267, 270–291, 294–315, 318–339, 342–363, 366–387, and 390–411; these read NAMS…KFLN, ALIA…AFRN, SLRH…LFQD, NLET…QFSQ, NLKE…VFDH, GLTK…VFQH, NLQV…TFDA, NLQE…LFHN, NLQR…IFMQ, HLNK…VFGP, NLRE…AFSH, QLQV…AFNG, NLRE…VFRS, NLRN…IFAN, and GLMT…IFDH. N-linked (GlcNAc...) asparagine glycosylation occurs at N75. N369 is a glycosylation site (N-linked (GlcNAc...) asparagine). One can recognise an LRRCT domain in the interval 423–473; it reads NPWRCDSNILPLHDWLILNRARLGTDTLPVCSSPASVRGQSLVIINVNFPG. The interval 476–509 is disordered; that stretch reads VQGPETPEVSSYPDTSSYPDSTSISSTTEITRST. Residues 485–506 are compositionally biased toward low complexity; that stretch reads SSYPDTSSYPDSTSISSTTEIT. Residues 537 to 557 traverse the membrane as a helical segment; the sequence is LAIAAIVIGIIALACSLAACI. Over 558-579 the chain is Cytoplasmic; sequence CCCCCKKRSQAVLMQMKAPNEC.

Expressed in chodrocytes (at protein level).

It is found in the cell membrane. This is Leucine-rich repeat-containing protein 15 (Lrrc15) from Mus musculus (Mouse).